The following is a 264-amino-acid chain: V-type proton ATPase subunit D (264 aa).

A compositionally biased stretch (basic and acidic residues) spans 214 to 230; the sequence is RDNAETDAQMKAKKAEQ. The disordered stretch occupies residues 214-264; it reads RDNAETDAQMKAKKAEQQRLALADSENAEGEQTENTPADILAAEEDEDVIF. The span at 255-264 shows a compositional bias: acidic residues; sequence AAEEDEDVIF.

Belongs to the V-ATPase D subunit family. In terms of assembly, V-ATPase is a heteromultimeric enzyme composed of a peripheral catalytic V1 complex (components A to H) attached to an integral membrane V0 proton pore complex (components: a, c, c', c'', d, e, f and VOA1).

The protein resides in the vacuole membrane. Its function is as follows. Subunit of the V1 complex of vacuolar(H+)-ATPase (V-ATPase), a multisubunit enzyme composed of a peripheral complex (V1) that hydrolyzes ATP and a membrane integral complex (V0) that translocates protons. V-ATPase is responsible for acidifying and maintaining the pH of intracellular compartments. The sequence is that of V-type proton ATPase subunit D (vma-8) from Neurospora crassa (strain ATCC 24698 / 74-OR23-1A / CBS 708.71 / DSM 1257 / FGSC 987).